The sequence spans 429 residues: Glutamate-1-semialdehyde 2,1-aminomutase (429 aa).

K265 bears the N6-(pyridoxal phosphate)lysine mark.

It belongs to the class-III pyridoxal-phosphate-dependent aminotransferase family. HemL subfamily. As to quaternary structure, homodimer. It depends on pyridoxal 5'-phosphate as a cofactor.

The protein localises to the cytoplasm. The enzyme catalyses (S)-4-amino-5-oxopentanoate = 5-aminolevulinate. It functions in the pathway porphyrin-containing compound metabolism; protoporphyrin-IX biosynthesis; 5-aminolevulinate from L-glutamyl-tRNA(Glu): step 2/2. The sequence is that of Glutamate-1-semialdehyde 2,1-aminomutase from Legionella pneumophila (strain Lens).